The chain runs to 267 residues: Small ribosomal subunit protein uS2 (267 aa).

Residues 226–267 (AAAPNSASVREEEFSAESADEGKGRRAPAKKGEKKADAPAAE) are disordered. Basic and acidic residues predominate over residues 245 to 267 (DEGKGRRAPAKKGEKKADAPAAE).

The protein belongs to the universal ribosomal protein uS2 family.

The sequence is that of Small ribosomal subunit protein uS2 from Xanthomonas oryzae pv. oryzae (strain MAFF 311018).